The chain runs to 595 residues: MHPRYSPAPPPHQQQQQQQQQPMGGPHQQQSAGGGPGHGGGASGHMRAPPNSQQLPPQMPRSQNYANGSSSAASVAAAPPTPRSAFPGAPLTASAVALKGAIPQRPPAMTSPAAAAAGAALAAGAPYRGATSWTPQGYAPAAAAAAAAVAQQAYRYTAPLPQPAYAAYTPHTATTQATTTYGQRVPTAASPSNTNSSSSSNTGSQSGTLSTSLSNTTNTNTTMGPNGTAQNQNQQGGEQLSKTNLYIRGLQQGTTDKDLINMCAQYGTIISTKAILDKTTNKCKGYGFVDFEQPAYAEGAVKGLQAKGVQAQMAKQQEQDPTNLYIANLPPHFKETDLEAMLAKYGQVVSTRILRDQQMNSKGVGFARMESREKCEQIIQMFNGNTIPGAKDPLLVKFADGGPKKKNLFKTPDPNARAWRDVSAEGIPVAYDPTMQQNGVSVNVGTPIGVPYSRFGAPQVGGYPVAGSQWIPGYMMTQPITQVDDQYSSSALQYMQMAAAPQLGVTSYKPEAVNQVQPRGISMMVSGDTAVPYGTMMPQLATLQIGNSYISPTYPYYAPPPTIIPTMPMTDSEQASTAASPDEAYTQYPHQAAPK.

Over residues 1-12 the composition is skewed to pro residues; it reads MHPRYSPAPPPH. Residues 1–82 are disordered; sequence MHPRYSPAPP…ASVAAAPPTP (82 aa). The residue at position 5 (Y5) is a Phosphotyrosine. Over residues 13 to 31 the composition is skewed to low complexity; the sequence is QQQQQQQQQPMGGPHQQQS. Gly residues predominate over residues 32 to 43; the sequence is AGGGPGHGGGAS. The segment covering 50–68 has biased composition (polar residues); it reads PNSQQLPPQMPRSQNYANG. Residues 69 to 78 are compositionally biased toward low complexity; that stretch reads SSSAASVAAA. 2 positions are modified to phosphotyrosine: Y138 and Y154. The disordered stretch occupies residues 184 to 238; the sequence is RVPTAASPSNTNSSSSSNTGSQSGTLSTSLSNTTNTNTTMGPNGTAQNQNQQGGE. Residues 190-238 are compositionally biased toward low complexity; sequence SPSNTNSSSSSNTGSQSGTLSTSLSNTTNTNTTMGPNGTAQNQNQQGGE. RRM domains are found at residues 243–316 and 322–401; these read TNLY…MAKQ and TNLY…FADG. The disordered stretch occupies residues 569 to 595; the sequence is MTDSEQASTAASPDEAYTQYPHQAAPK.

Has a role in the perception of gravity. The chain is Protein alan shepard from Drosophila virilis (Fruit fly).